A 312-amino-acid polypeptide reads, in one-letter code: Protoheme IX farnesyltransferase (312 aa).

The next 9 helical transmembrane spans lie at 29–49 (VMSLVVFTGLVGLVVAPGHMN), 50–70 (PVLAAISILCVAVGAGASGAL), 90–110 (IPAGIIAPNQVLAFGLTLSAF), 117–137 (LMVNWLSAALLAFTIFFYAVV), 150–170 (IVIGGAAGAFPPMIGWAAATG), 177–197 (VVLFMIIFLWTPPHFWALSLF), 223–243 (ALFYSIIMAPVGVLPWVLGFA), 248–268 (GAISTLLGLAFVYYAWRMWVA), and 292–312 (LFAVLLVEALVMKALIAFGGF).

It belongs to the UbiA prenyltransferase family. Protoheme IX farnesyltransferase subfamily.

The protein localises to the cell inner membrane. The enzyme catalyses heme b + (2E,6E)-farnesyl diphosphate + H2O = Fe(II)-heme o + diphosphate. Its pathway is porphyrin-containing compound metabolism; heme O biosynthesis; heme O from protoheme: step 1/1. Converts heme B (protoheme IX) to heme O by substitution of the vinyl group on carbon 2 of heme B porphyrin ring with a hydroxyethyl farnesyl side group. This chain is Protoheme IX farnesyltransferase, found in Brucella anthropi (strain ATCC 49188 / DSM 6882 / CCUG 24695 / JCM 21032 / LMG 3331 / NBRC 15819 / NCTC 12168 / Alc 37) (Ochrobactrum anthropi).